A 367-amino-acid polypeptide reads, in one-letter code: Protein RecA (367 aa).

Residues 1 to 14 (MSTEVNANQSPNAE) are compositionally biased toward polar residues. The disordered stretch occupies residues 1 to 24 (MSTEVNANQSPNAESRQEAARSGE). A compositionally biased stretch (basic and acidic residues) spans 15–24 (SRQEAARSGE). 84–91 (GPESSGKT) lines the ATP pocket. The tract at residues 348–367 (GSEVSSNSMRPLTTANRKAA) is disordered. The segment covering 349 to 367 (SEVSSNSMRPLTTANRKAA) has biased composition (polar residues).

It belongs to the RecA family.

It localises to the cytoplasm. Can catalyze the hydrolysis of ATP in the presence of single-stranded DNA, the ATP-dependent uptake of single-stranded DNA by duplex DNA, and the ATP-dependent hybridization of homologous single-stranded DNAs. It interacts with LexA causing its activation and leading to its autocatalytic cleavage. The polypeptide is Protein RecA (Prochlorococcus marinus (strain MIT 9211)).